Reading from the N-terminus, the 127-residue chain is Trefoil factor 2 (127 aa).

Positions 1-21 are cleaved as a signal peptide; sequence EPQRPAPGHPPPAGAVCLTGA. Glutamine 22 is subject to Pyrrolidone carboxylic acid. 2 consecutive P-type domains span residues 27–71 and 77–120; these read CRCS…FKPL and EECV…FFPM. Cystine bridges form between cysteine 27–cysteine 125, cysteine 29–cysteine 56, cysteine 40–cysteine 55, cysteine 50–cysteine 67, cysteine 79–cysteine 105, cysteine 89–cysteine 104, and cysteine 99–cysteine 116.

As to expression, found in pancreas.

Its subcellular location is the secreted. Its function is as follows. Inhibits gastrointestinal motility and gastric acid secretion. Could function as a structural component of gastric mucus, possibly by stabilizing glycoproteins in the mucus gel through interactions with carbohydrate side chains. The polypeptide is Trefoil factor 2 (TFF2) (Sus scrofa (Pig)).